A 221-amino-acid chain; its full sequence is MWSFLLPDARRRRDRALGLAGVLRSALLVQDIARNGAQPGDLLQTCIRSVLALDSKDSLRALGDIDSLRHSLALLCPLLQRGPGNAREAELLRYSMALTTLGKRLLKNASATRRVQEGVEQAQRQIAHFADPMQRSIVAGLAQTYTEAIGILRPRIIVSGESRFLSDPDDAARIRTLLLSGIRAAVLWRQAGGRLPATILERRALCQEAEELLATHPQLTR.

This sequence belongs to the HflD family.

The protein resides in the cytoplasm. It localises to the cell inner membrane. The polypeptide is High frequency lysogenization protein HflD homolog (Acidithiobacillus ferrooxidans (strain ATCC 23270 / DSM 14882 / CIP 104768 / NCIMB 8455) (Ferrobacillus ferrooxidans (strain ATCC 23270))).